A 492-amino-acid chain; its full sequence is Phosphatidylinositol 4-kinase type 2-beta (492 aa).

The span at 1–11 (MEPKQTADARD) shows a compositional bias: basic and acidic residues. The disordered stretch occupies residues 1 to 98 (MEPKQTADAR…SDRENMSGGH (98 aa)). The PI3K/PI4K catalytic domain occupies 127–462 (GVFPERISQG…VQMPRVVVER (336 aa)). The G-loop stretch occupies residues 133–139 (ISQGSSG). Residues S140 and K155 each contribute to the ATP site. The interval 160–162 (EPY) is important for substrate binding. Residues 168-181 (KWTKYFHKICCPCC) form an important for interaction with membranes region. ATP contacts are provided by residues 264 to 267 (QLFV) and 278 to 279 (RK). The tract at residues 271-279 (KEADYWLRK) is important for interaction with membranes. The segment at 308 to 316 (RNTDRGNDN) is catalytic loop. The interval 353–373 (AIDNGLAFPFKHPDEWRAYPF) is activation loop. ATP is bound at residue D355. The important for interaction with membranes stretch occupies residues 368-377 (WRAYPFHWAW).

This sequence belongs to the PI3/PI4-kinase family. Type II PI4K subfamily.

The protein localises to the cytoplasm. It localises to the cytosol. It is found in the golgi apparatus membrane. Its subcellular location is the endoplasmic reticulum membrane. The protein resides in the cell membrane. The protein localises to the early endosome membrane. It carries out the reaction a 1,2-diacyl-sn-glycero-3-phospho-(1D-myo-inositol) + ATP = a 1,2-diacyl-sn-glycero-3-phospho-(1D-myo-inositol 4-phosphate) + ADP + H(+). Functionally, contributes to the overall PI4-kinase activity of the cell. This contribution may be especially significant in plasma membrane, endosomal and Golgi compartments. The phosphorylation of phosphatidylinositol (PI) to PI4P is the first committed step in the generation of phosphatidylinositol 4,5-bisphosphate (PIP2), a precursor of the second messenger inositol 1,4,5-trisphosphate (InsP3). In Xenopus tropicalis (Western clawed frog), this protein is Phosphatidylinositol 4-kinase type 2-beta (pi4k2b).